The chain runs to 74 residues: Putative defensin-like protein 186 (74 aa).

The signal sequence occupies residues 1 to 22; sequence MKNSSIILVLVFFFFISSSGEA. Disulfide bonds link Cys-25-Cys-74, Cys-31-Cys-51, Cys-37-Cys-68, and Cys-41-Cys-70.

This sequence belongs to the DEFL family.

It localises to the secreted. This Arabidopsis thaliana (Mouse-ear cress) protein is Putative defensin-like protein 186 (LCR40).